The sequence spans 545 residues: Phenylalanine--tRNA ligase beta subunit (545 aa).

The 76-residue stretch at 268–343 (FLHKIQNVRE…MSIGYNNLEP (76 aa)) folds into the B5 domain. D321, D327, E330, and D331 together coordinate Mg(2+).

The protein belongs to the phenylalanyl-tRNA synthetase beta subunit family. Type 2 subfamily. In terms of assembly, tetramer of two alpha and two beta subunits. It depends on Mg(2+) as a cofactor.

It is found in the cytoplasm. It catalyses the reaction tRNA(Phe) + L-phenylalanine + ATP = L-phenylalanyl-tRNA(Phe) + AMP + diphosphate + H(+). The protein is Phenylalanine--tRNA ligase beta subunit of Saccharolobus islandicus (strain Y.N.15.51 / Yellowstone #2) (Sulfolobus islandicus).